An 88-amino-acid polypeptide reads, in one-letter code: Sec-independent protein translocase protein TatA (88 aa).

Residues 1 to 21 form a helical membrane-spanning segment; it reads MGGISIWQLLIIAVIVVLLFG. Positions 41–88 are disordered; it reads KAMGDENQKETNNAEKTTNDADFDTKNLAQKTSTEEKSTTESKNKEQV. 2 stretches are compositionally biased toward basic and acidic residues: residues 42–65 and 73–88; these read AMGD…DFDT and STEE…KEQV.

It belongs to the TatA/E family. The Tat system comprises two distinct complexes: a TatABC complex, containing multiple copies of TatA, TatB and TatC subunits, and a separate TatA complex, containing only TatA subunits. Substrates initially bind to the TatABC complex, which probably triggers association of the separate TatA complex to form the active translocon.

Its subcellular location is the cell inner membrane. In terms of biological role, part of the twin-arginine translocation (Tat) system that transports large folded proteins containing a characteristic twin-arginine motif in their signal peptide across membranes. TatA could form the protein-conducting channel of the Tat system. This Proteus mirabilis (strain HI4320) protein is Sec-independent protein translocase protein TatA.